The following is a 466-amino-acid chain: Putative ABC transporter ATP-binding protein MG065 (466 aa).

The ABC transporter domain occupies 233–463 (IELKNVYKYI…NLNPKQVEEI (231 aa)). 269-276 (GPSGSGKT) is a binding site for ATP.

This sequence belongs to the ABC transporter superfamily.

The sequence is that of Putative ABC transporter ATP-binding protein MG065 from Mycoplasma genitalium (strain ATCC 33530 / DSM 19775 / NCTC 10195 / G37) (Mycoplasmoides genitalium).